The following is an 867-amino-acid chain: Glutamate receptor 1.2 (867 aa).

A signal peptide spans 1 to 27; the sequence is MVRICIQTPILLSFLLVLLFFISNCFA. At 28–560 the chain is on the extracellular side; sequence SSQNNDDDKR…SMWVFFQPLT (533 aa). N-linked (GlcNAc...) asparagine glycosylation is found at Asn-301, Asn-400, Asn-496, and Asn-499. A helical transmembrane segment spans residues 561-581; that stretch reads PNLWITSAAFFVLTGIIVWLI. Over 582-590 the chain is Cytoplasmic; sequence ERAENKEFQ. A helical membrane pass occupies residues 591–611; the sequence is GSWPQQIGVVIWFGFSTLVYA. At 612 to 622 the chain is on the cytoplasmic side; sequence HREKLQHNLSR. The chain crosses the membrane as a helical span at residues 623–643; the sequence is FVVTVWVFAVLILVTSYTATL. The Extracellular segment spans residues 644–792; sequence TSMMTVQQIR…NPITLYRFRG (149 aa). 4 N-linked (GlcNAc...) asparagine glycosylation sites follow: Asn-676, Asn-688, Asn-699, and Asn-748. Residues 793 to 813 traverse the membrane as a helical segment; sequence LFMITGVSFAFALAVLLILWL. Topologically, residues 814–867 are cytoplasmic; sequence RERWEILVNSVNIYFSQRLRHFRILFTRTIHPSPLGLDNPIGENAVQMAQRNRR.

The protein belongs to the glutamate-gated ion channel (TC 1.A.10.1) family. May form heteromers. As to expression, expressed predominantly in roots and siliques.

It is found in the membrane. Functionally, glutamate-gated receptor that probably acts as a non-selective cation channel. May be involved in light-signal transduction and calcium homeostasis via the regulation of calcium influx into cells. The sequence is that of Glutamate receptor 1.2 (GLR1.2) from Arabidopsis thaliana (Mouse-ear cress).